The chain runs to 100 residues: MIKLTVSHHKLTASGHALFAKKGQDIVCAAVSGIIFGALPWFETNSIAVQEDATVPSLSLELVQPTAKLITGLSVVIMQLKTLAHSYPQFISFEDQRKDE.

The active-site Proton donor is H16. The active-site Nucleophile is the C28.

It belongs to the Prp family. In terms of assembly, homodimer.

An essential cysteine protease that cleaves the N-terminus from ribosomal protein bL27. This Mycoplasma pneumoniae (strain ATCC 29342 / M129 / Subtype 1) (Mycoplasmoides pneumoniae) protein is Ribosomal processing cysteine protease Prp.